Here is a 129-residue protein sequence, read N- to C-terminus: Small ribosomal subunit protein uS11 (129 aa).

Belongs to the universal ribosomal protein uS11 family. In terms of assembly, part of the 30S ribosomal subunit. Interacts with proteins S7 and S18. Binds to IF-3.

In terms of biological role, located on the platform of the 30S subunit, it bridges several disparate RNA helices of the 16S rRNA. Forms part of the Shine-Dalgarno cleft in the 70S ribosome. The polypeptide is Small ribosomal subunit protein uS11 (Aliivibrio fischeri (strain ATCC 700601 / ES114) (Vibrio fischeri)).